We begin with the raw amino-acid sequence, 191 residues long: Inosine triphosphate pyrophosphatase (191 aa).

9–14 provides a ligand contact to ITP; the sequence is TGNAKK. Glu-39 lines the Mg(2+) pocket. ITP contacts are provided by residues Lys-51, 67–68, Lys-84, 143–146, Lys-166, and 171–172; these read DT, FGWD, and HR.

Belongs to the HAM1 NTPase family. As to quaternary structure, homodimer. The cofactor is Mg(2+). It depends on Mn(2+) as a cofactor.

The protein localises to the cytoplasm. It catalyses the reaction ITP + H2O = IMP + diphosphate + H(+). The catalysed reaction is dITP + H2O = dIMP + diphosphate + H(+). It carries out the reaction XTP + H2O = XMP + diphosphate + H(+). Functionally, pyrophosphatase that hydrolyzes non-canonical purine nucleotides such as inosine triphosphate (ITP), deoxyinosine triphosphate (dITP) or xanthosine 5'-triphosphate (XTP) to their respective monophosphate derivatives. The enzyme does not distinguish between the deoxy- and ribose forms. Probably excludes non-canonical purines from RNA and DNA precursor pools, thus preventing their incorporation into RNA and DNA and avoiding chromosomal lesions. The protein is Inosine triphosphate pyrophosphatase of Drosophila melanogaster (Fruit fly).